A 355-amino-acid polypeptide reads, in one-letter code: MNQVRKWNIIGGRVIKTGIAVFLTVLVCEFFNIPTIFAVITAIVTIEPTATDSIKKGLVRFPASTIGSAYAMTFTFFLGHQALSYALAAMFTIVTCQKLRLHAGTLVATLTAVAMIPITADHYFTAFLIRLATTSTGIIVSTVVNFFILPPHYVKTISGCTEELFVKTANVMEEWLTALMDGKVIKKETTYNLSKLTVLLHKAVQFVQYEQKDWKYHRHTKKEMRSFLLVQKQLHLLQQIIYHIDNLARAPIETCDWSQNEKEILRRTIHSIISILRNYCEKIDEEHFKLIDELDKQFWTNKNDLAHCKPNQYHHHFSSESIILFEVLSIHDMLEELKQIFEKYESENQLNCSVH.

4 helical membrane passes run 19-39, 74-94, 109-129, and 131-151; these read IAVFLTVLVCEFFNIPTIFAV, FTFFLGHQALSYALAAMFTIV, TLTAVAMIPITADHYFTAFLI, and LATTSTGIIVSTVVNFFILPP.

It belongs to the UPF0421 family.

Its subcellular location is the cell membrane. The chain is UPF0421 protein BALH_2468 from Bacillus thuringiensis (strain Al Hakam).